We begin with the raw amino-acid sequence, 422 residues long: Sphingomyelin phosphodiesterase 2 (422 aa).

Glu49 is a Mg(2+) binding site. The active-site Proton acceptor is His272. 2 helical membrane passes run Ala325–Ala345 and Ala354–Phe374. Positions Thr397–Lys422 are disordered. Residues Arg412–Lys422 show a composition bias toward basic and acidic residues.

Belongs to the neutral sphingomyelinase family. Mg(2+) serves as cofactor.

It is found in the membrane. It carries out the reaction a sphingomyelin + H2O = phosphocholine + an N-acylsphing-4-enine + H(+). The enzyme catalyses 1-O-octadecyl-sn-glycero-3-phosphocholine + H2O = 1-O-octadecyl-sn-glycerol + phosphocholine + H(+). The catalysed reaction is an N-(acyl)-sphingosylphosphocholine + H2O = an N-acyl-sphingoid base + phosphocholine + H(+). It catalyses the reaction 1-hexadecanoyl-sn-glycero-3-phosphocholine + H2O = 1-hexadecanoyl-sn-glycerol + phosphocholine + H(+). It carries out the reaction a sphingosylphosphocholine + H2O = a sphingoid base + phosphocholine + H(+). The enzyme catalyses 1-O-hexadecyl-sn-glycero-3-phosphocholine + H2O = 1-O-hexadecyl-sn-glycerol + phosphocholine + H(+). Its pathway is lipid metabolism; sphingolipid metabolism. Its function is as follows. Catalyzes the hydrolysis of sphingomyelin to form ceramide and phosphocholine. Ceramide mediates numerous cellular functions, such as apoptosis and growth arrest, and is capable of regulating these 2 cellular events independently. Also hydrolyzes sphingosylphosphocholine. Hydrolyze 1-acyl-2-lyso-sn-glycero-3-phosphocholine (lyso-PC) and 1-O-alkyl-2-lyso-sn-glycero-3-phosphocholine (lyso-platelet-activating factor). This Rattus norvegicus (Rat) protein is Sphingomyelin phosphodiesterase 2 (Smpd2).